The chain runs to 99 residues: A-type ATP synthase subunit F (99 aa).

This sequence belongs to the V-ATPase F subunit family. In terms of assembly, has multiple subunits with at least A(3), B(3), C, D, E, F, H, I and proteolipid K(x).

Its subcellular location is the cell membrane. Functionally, component of the A-type ATP synthase that produces ATP from ADP in the presence of a proton gradient across the membrane. In Methanococcus maripaludis (strain C7 / ATCC BAA-1331), this protein is A-type ATP synthase subunit F.